A 521-amino-acid chain; its full sequence is Importin subunit alpha-4 (521 aa).

The disordered stretch occupies residues 1–29; it reads MAENPSLENHRIKSFKNKGRDVETMRRHR. N-acetylalanine is present on Ala2. The IBB domain maps to 2–58; sequence AENPSLENHRIKSFKNKGRDVETMRRHRNEVTVELRKNKRDEHLLKKRNVPQEESLE. Basic and acidic residues predominate over residues 18–29; the sequence is KGRDVETMRRHR. The Nuclear localization signal signature appears at 43 to 52; that stretch reads EHLLKKRNVP. Residues Ser56 and Ser60 each carry the phosphoserine modification. The ARM 1; truncated repeat unit spans residues 66-106; sequence FKAQNVTLEAILQNATSDNPVVQLSAVQAARKLLSSDRNPP. ARM repeat units follow at residues 107–149, 150–194, 195–233, 234–278, 279–318, 319–360, 361–400, and 401–443; these read IDDL…TSAQ, TQAV…CRDY, VISLGVVKPLLSFISPSIPITFLRNVTWVIVNLCRNKDP, PPPM…EQIQ, MVIDSGVVPFLVPLLSHQEVKVQTAALRAVGNIVTGTDEQ, TQVV…NQQQ, VQAVIDAGLIPMIIHQLAKGDFGTQKEAAWAISNLTISGR, and KDQV…IMAG. Positions 137–229 are NLS binding site (major); sequence WALTNIASGT…VTWVIVNLCR (93 aa). Positions 306 to 394 are NLS binding site (minor); the sequence is RAVGNIVTGT…QKEAAWAISN (89 aa). The ARM 10; atypical repeat unit spans residues 447–485; the sequence is STIAEIIEECGGLEKIEVLQQHENEDIYKLAFEIIDQYF. Tyr484 is modified (phosphotyrosine).

Belongs to the importin alpha family. In terms of assembly, forms a complex with importin subunit beta-1. Interacts with DDX21. Interacts with NCBP1, NCBP2/CBP20 and NCBP3. Interacts with RCC1. Interacts with ZC3H11A. (Microbial infection) Interacts with HIV-1 integrase; this interaction might play a role in nuclear import of HIV pre-integration complex. As to quaternary structure, (Microbial infection) Interacts with influenza virus nucleoprotein; this interaction might play a role in nuclear import of viral genome. As to expression, ubiquitous. Highest levels in heart and skeletal muscle.

It localises to the cytoplasm. The protein resides in the nucleus. Functionally, functions in nuclear protein import as an adapter protein for nuclear receptor KPNB1. Binds specifically and directly to substrates containing either a simple or bipartite NLS motif. Docking of the importin/substrate complex to the nuclear pore complex (NPC) is mediated by KPNB1 through binding to nucleoporin FxFG repeats and the complex is subsequently translocated through the pore by an energy requiring, Ran-dependent mechanism. At the nucleoplasmic side of the NPC, Ran binds to importin-beta and the three components separate and importin-alpha and -beta are re-exported from the nucleus to the cytoplasm where GTP hydrolysis releases Ran from importin. The directionality of nuclear import is thought to be conferred by an asymmetric distribution of the GTP- and GDP-bound forms of Ran between the cytoplasm and nucleus. In vitro, mediates the nuclear import of human cytomegalovirus UL84 by recognizing a non-classical NLS. Recognizes NLSs of influenza A virus nucleoprotein probably through ARM repeats 7-9. This is Importin subunit alpha-4 (KPNA3) from Homo sapiens (Human).